The sequence spans 182 residues: Large ribosomal subunit protein uL6 (182 aa).

The protein belongs to the universal ribosomal protein uL6 family. In terms of assembly, part of the 50S ribosomal subunit.

This protein binds to the 23S rRNA, and is important in its secondary structure. It is located near the subunit interface in the base of the L7/L12 stalk, and near the tRNA binding site of the peptidyltransferase center. The sequence is that of Large ribosomal subunit protein uL6 from Methanococcus maripaludis (strain C7 / ATCC BAA-1331).